The sequence spans 211 residues: Endonuclease III (211 aa).

A HhH domain is found at 111–130 (AHALESLPGVGHKTANVVLN). Positions 190, 197, 200, and 206 each coordinate [4Fe-4S] cluster.

This sequence belongs to the Nth/MutY family. [4Fe-4S] cluster serves as cofactor.

The catalysed reaction is 2'-deoxyribonucleotide-(2'-deoxyribose 5'-phosphate)-2'-deoxyribonucleotide-DNA = a 3'-end 2'-deoxyribonucleotide-(2,3-dehydro-2,3-deoxyribose 5'-phosphate)-DNA + a 5'-end 5'-phospho-2'-deoxyribonucleoside-DNA + H(+). Its function is as follows. DNA repair enzyme that has both DNA N-glycosylase activity and AP-lyase activity. The DNA N-glycosylase activity releases various damaged pyrimidines from DNA by cleaving the N-glycosidic bond, leaving an AP (apurinic/apyrimidinic) site. The AP-lyase activity cleaves the phosphodiester bond 3' to the AP site by a beta-elimination, leaving a 3'-terminal unsaturated sugar and a product with a terminal 5'-phosphate. This Treponema pallidum (strain Nichols) protein is Endonuclease III.